An 88-amino-acid chain; its full sequence is Small ribosomal subunit protein uS17 (88 aa).

The protein belongs to the universal ribosomal protein uS17 family. Part of the 30S ribosomal subunit.

One of the primary rRNA binding proteins, it binds specifically to the 5'-end of 16S ribosomal RNA. This chain is Small ribosomal subunit protein uS17, found in Prochlorococcus marinus (strain MIT 9301).